The following is a 214-amino-acid chain: Ras-related protein Rab-17 (214 aa).

The residue at position 29 (Ser29) is a Phosphoserine. 4 residues coordinate GTP: Gly31, Lys32, Thr33, and Thr50. Positions 33, 50, and 73 each coordinate Mg(2+). Positions 43–54 match the Switch 1 motif; the sequence is DFSNVLPTVGCA. A Switch 2 motif is present at residues 75–91; sequence AGQEKYQSVCHLYFRGA. GTP contacts are provided by Gly76, Asn132, Lys133, Asp135, and Ala163. The segment at 183-204 is disordered; sequence RAGDTGSSRPQEGEAVALNQEP. 2 S-geranylgeranyl cysteine lipidation sites follow: Cys211 and Cys212.

Belongs to the small GTPase superfamily. Rab family. The cofactor is Mg(2+). Expressed in kidney, liver, and intestine mainly by epithelial cells. Expressed in hippocampus (at protein level).

It is found in the recycling endosome membrane. The protein resides in the melanosome. It localises to the cell projection. Its subcellular location is the dendrite. It catalyses the reaction GTP + H2O = GDP + phosphate + H(+). Its activity is regulated as follows. Regulated by guanine nucleotide exchange factors (GEFs) which promote the exchange of bound GDP for free GTP. Regulated by GTPase activating proteins (GAPs) which increase the GTP hydrolysis activity. Inhibited by GDP dissociation inhibitors (GDIs). Its function is as follows. The small GTPases Rab are key regulators of intracellular membrane trafficking, from the formation of transport vesicles to their fusion with membranes. Rabs cycle between an inactive GDP-bound form and an active GTP-bound form that is able to recruit to membranes different set of downstream effectors directly responsible for vesicle formation, movement, tethering and fusion. RAB17 is involved in transcytosis, the directed movement of endocytosed material through the cell and its exocytosis from the plasma membrane at the opposite side. Mainly observed in epithelial cells, transcytosis mediates, for instance, the transcellular transport of immunoglobulins from the basolateral surface to the apical surface. Most probably controls membrane trafficking through apical recycling endosomes in a post-endocytic step of transcytosis. Required for melanosome transport and release from melanocytes, it also regulates dendrite and dendritic spine development. May also play a role in cell migration. The protein is Ras-related protein Rab-17 of Mus musculus (Mouse).